Consider the following 316-residue polypeptide: UDP-N-acetylenolpyruvoylglucosamine reductase (316 aa).

An FAD-binding PCMH-type domain is found at 30 to 194; the sequence is VGGEADYLVF…LSVKFALAPG (165 aa). Residue Arg-173 is part of the active site. The active-site Proton donor is Ser-223. Glu-293 is a catalytic residue.

It belongs to the MurB family. FAD is required as a cofactor.

It localises to the cytoplasm. It catalyses the reaction UDP-N-acetyl-alpha-D-muramate + NADP(+) = UDP-N-acetyl-3-O-(1-carboxyvinyl)-alpha-D-glucosamine + NADPH + H(+). Its pathway is cell wall biogenesis; peptidoglycan biosynthesis. Cell wall formation. This chain is UDP-N-acetylenolpyruvoylglucosamine reductase, found in Streptococcus pneumoniae serotype 2 (strain D39 / NCTC 7466).